We begin with the raw amino-acid sequence, 90 residues long: Guanine nucleotide-binding protein subunit gamma (90 aa).

Residue Cys-86 is the site of S-palmitoyl cysteine attachment. A Cysteine methyl ester modification is found at Cys-87. Cys-87 is lipidated: S-farnesyl cysteine. Positions 88–90 (TIM) are cleaved as a propeptide — removed in mature form.

The protein belongs to the G protein gamma family. In terms of assembly, g proteins are composed of 3 units, alpha, beta and gamma.

The protein localises to the membrane. The chain is Guanine nucleotide-binding protein subunit gamma from Kluyveromyces lactis (strain ATCC 8585 / CBS 2359 / DSM 70799 / NBRC 1267 / NRRL Y-1140 / WM37) (Yeast).